Here is a 486-residue protein sequence, read N- to C-terminus: Cobyric acid synthase (486 aa).

The GATase cobBQ-type domain maps to valine 248–alanine 435. Cysteine 329 (nucleophile) is an active-site residue. The active site involves histidine 427.

It belongs to the CobB/CobQ family. CobQ subfamily.

It participates in cofactor biosynthesis; adenosylcobalamin biosynthesis. In terms of biological role, catalyzes amidations at positions B, D, E, and G on adenosylcobyrinic A,C-diamide. NH(2) groups are provided by glutamine, and one molecule of ATP is hydrogenolyzed for each amidation. In Pseudomonas syringae pv. syringae (strain B728a), this protein is Cobyric acid synthase.